A 149-amino-acid polypeptide reads, in one-letter code: Urease accessory protein UreE (149 aa).

It belongs to the UreE family.

It is found in the cytoplasm. Involved in urease metallocenter assembly. Binds nickel. Probably functions as a nickel donor during metallocenter assembly. This chain is Urease accessory protein UreE, found in Ruegeria pomeroyi (strain ATCC 700808 / DSM 15171 / DSS-3) (Silicibacter pomeroyi).